Reading from the N-terminus, the 274-residue chain is Cytochrome b-c1 complex subunit Rieske, mitochondrial (274 aa).

Over 79–103 (SHTDVKVPDFSEYRRLEVLDSTKSS) the chain is Mitochondrial matrix. Residues 104–140 (RESSEARKGFSYLVTGVTTVGVAYAAKNAVTQFVSSM) traverse the membrane as a helical segment. Residues 141–274 (SASADVLALA…FTSDDMVIVG (134 aa)) lie on the Mitochondrial intermembrane side of the membrane. One can recognise a Rieske domain in the interval 187 to 272 (EAAVELSQLR…YEFTSDDMVI (86 aa)). [2Fe-2S] cluster is bound by residues Cys-217, His-219, Cys-236, His-239, and Ser-241. Cys-222 and Cys-238 form a disulfide bridge.

The protein belongs to the Rieske iron-sulfur protein family. As to quaternary structure, component of the ubiquinol-cytochrome c oxidoreductase (cytochrome b-c1 complex, complex III, CIII), a multisubunit enzyme composed of 11 subunits. The complex is composed of 3 respiratory subunits cytochrome b, cytochrome c1 and Rieske protein UQCRFS1, 2 core protein subunits UQCRC1/QCR1 and UQCRC2/QCR2, and 6 low-molecular weight protein subunits UQCRH/QCR6, UQCRB/QCR7, UQCRQ/QCR8, UQCR10/QCR9, UQCR11/QCR10 and subunit 9, the cleavage product of Rieske protein UQCRFS1. The complex exists as an obligatory dimer and forms supercomplexes (SCs) in the inner mitochondrial membrane with NADH-ubiquinone oxidoreductase (complex I, CI) and cytochrome c oxidase (complex IV, CIV), resulting in different assemblies (supercomplex SCI(1)III(2)IV(1) and megacomplex MCI(2)III(2)IV(2)). Incorporation of the Rieske protein UQCRFS1 is the penultimate step in complex III assembly. Interacts with TTC19, which is involved in the clearance of UQCRFS1 fragments. Component of the ubiquinol-cytochrome c oxidoreductase (cytochrome b-c1 complex, complex III, CIII). Subunit 9 corresponds to the mitochondrial targeting sequence (MTS) of Rieske protein UQCRFS1. It is retained after processing and incorporated inside complex III, where it remains bound to the complex and localizes between the 2 core subunits UQCRC1/QCR1 and UQCRC2/QCR2. [2Fe-2S] cluster is required as a cofactor. Post-translationally, proteolytic processing is necessary for the correct insertion of UQCRFS1 in the complex III dimer. Several fragments are generated during UQCRFS1 insertion, most probably due to the endogenous matrix-processing peptidase (MPP) activity of the 2 core protein subunits UQCRC1/QCR1 and UQCRC2/QCR2, which are homologous to the 2 mitochondrial-processing peptidase (MPP) subunits beta-MPP and alpha-MPP respectively. The action of the protease is also necessary for the clearance of the UQCRFS1 fragments.

It localises to the mitochondrion inner membrane. It carries out the reaction a quinol + 2 Fe(III)-[cytochrome c](out) = a quinone + 2 Fe(II)-[cytochrome c](out) + 2 H(+)(out). Functionally, component of the ubiquinol-cytochrome c oxidoreductase, a multisubunit transmembrane complex that is part of the mitochondrial electron transport chain which drives oxidative phosphorylation. The respiratory chain contains 3 multisubunit complexes succinate dehydrogenase (complex II, CII), ubiquinol-cytochrome c oxidoreductase (cytochrome b-c1 complex, complex III, CIII) and cytochrome c oxidase (complex IV, CIV), that cooperate to transfer electrons derived from NADH and succinate to molecular oxygen, creating an electrochemical gradient over the inner membrane that drives transmembrane transport and the ATP synthase. The cytochrome b-c1 complex catalyzes electron transfer from ubiquinol to cytochrome c, linking this redox reaction to translocation of protons across the mitochondrial inner membrane, with protons being carried across the membrane as hydrogens on the quinol. In the process called Q cycle, 2 protons are consumed from the matrix, 4 protons are released into the intermembrane space and 2 electrons are passed to cytochrome c. The Rieske protein is a catalytic core subunit containing a [2Fe-2S] iron-sulfur cluster. It cycles between 2 conformational states during catalysis to transfer electrons from the quinol bound in the Q(0) site in cytochrome b to cytochrome c1. Incorporation of UQCRFS1 is the penultimate step in complex III assembly. Its function is as follows. Component of the ubiquinol-cytochrome c oxidoreductase (cytochrome b-c1 complex, complex III, CIII). UQCRFS1 undergoes proteolytic processing once it is incorporated in the complex III dimer. One of the fragments, called subunit 9, corresponds to its mitochondrial targeting sequence (MTS). The proteolytic processing is necessary for the correct insertion of UQCRFS1 in the complex III dimer, but the persistence of UQCRFS1-derived fragments may prevent newly imported UQCRFS1 to be processed and assembled into complex III and is detrimental for the complex III structure and function. This chain is Cytochrome b-c1 complex subunit Rieske, mitochondrial (UQCRFS1), found in Pan paniscus (Pygmy chimpanzee).